We begin with the raw amino-acid sequence, 469 residues long: Bile acid receptor (469 aa).

Lys119 participates in a covalent cross-link: Glycyl lysine isopeptide (Lys-Gly) (interchain with G-Cter in SUMO1). The segment at residues 121 to 196 is a DNA-binding region (nuclear receptor); sequence DELCVVCGDR…MGMLAECLLT (76 aa). The segment at 124-144 adopts an NR C4-type zinc-finger fold; that stretch reads CVVCGDRASGYHYNALTCEGC. 2 positions are modified to phosphoserine; by PKC/PRKCA: Ser132 and Ser151. At Lys154 the chain carries N6-acetyllysine; by EP300. The NR C4-type zinc-finger motif lies at 160–184; it reads CKNGGNCVMDMYMRRKCQDCRLRKC. Residue Lys203 is modified to N6-methyllysine; by SETD7. Residue Lys210 is modified to N6-acetyllysine; by EP300. Residues 245-469 enclose the NR LBD domain; the sequence is DQQTLLDYIM…PLLCEIWDVQ (225 aa). A Glycyl lysine isopeptide (Lys-Gly) (interchain with G-Cter in SUMO1) cross-link involves residue Lys272. Arg328 contacts 3beta,7beta-dihydroxy-5beta-cholan-24-oate. Residues Arg328, Tyr358, and Tyr366 each coordinate chenodeoxycholate. Tyr366 provides a ligand contact to 3beta,7beta-dihydroxy-5beta-cholan-24-oate. A Phosphothreonine; by PKC/PRKCZ modification is found at Thr439. Residue His444 participates in chenodeoxycholate binding.

It belongs to the nuclear hormone receptor family. NR1 subfamily. In terms of assembly, heterodimer with RXRA; the heterodimerization enhances the binding affinity for LXXLL motifs from coactivators. Binds DNA predominantly as a heterodimer with RXRA. After activation by agonist binding interacts with coactivators. Interacts with NCOA1, NCOA2, PPARGC1A, CARM1, SETD7, PRMT1, GPS2, SMARCA4 and MED1, EP300 and SMARCD1. Interacts with XRCC5 and XRCC6; decreasing NR1H4/FXR transactivation activity towards ABCB11/BSEP. Interacts with PAGR1 AND NCOA6; indicative for an association with an MLL2/MLL3 complex (ASCOM). In terms of processing, acetylated by EP300. Lys-210 as is the major acetylation site for EP300; the dynamicly regulated acetylation inhibits heterodimerization with RXRA and transactivation activity. Deacetylated by SIRT1. Methylation may increase transactivation of target genes. Post-translationally, phosphorylation by PKC/PRKCA increases transactivation activity by promoting association with PPARGC1A. In terms of processing, sumoylated upon ligand binding.

The protein localises to the nucleus. Its function is as follows. Ligand-activated transcription factor. Receptor for bile acids (BAs) such as chenodeoxycholic acid (CDCA), lithocholic acid, deoxycholic acid (DCA) and allocholic acid (ACA). Plays a essential role in BA homeostasis through the regulation of genes involved in BA synthesis, conjugation and enterohepatic circulation. Also regulates lipid and glucose homeostasis and is involved innate immune response. The FXR-RXR heterodimer binds predominantly to farnesoid X receptor response elements (FXREs) containing two inverted repeats of the consensus sequence 5'-AGGTCA-3' in which the monomers are spaced by 1 nucleotide (IR-1) but also to tandem repeat DR1 sites with lower affinity, and can be activated by either FXR or RXR-specific ligands. It is proposed that monomeric nuclear receptors such as NR5A2/LRH-1 bound to coregulatory nuclear responsive element (NRE) halfsites located in close proximity to FXREs modulate transcriptional activity. In the liver activates transcription of the corepressor NR0B2 thereby indirectly inhibiting CYP7A1 and CYP8B1 (involved in BA synthesis) implicating at least in part histone demethylase KDM1A resulting in epigenomic repression, and SLC10A1/NTCP (involved in hepatic uptake of conjugated BAs). Activates transcription of the repressor MAFG (involved in regulation of BA synthesis). Activates transcription of SLC27A5/BACS and BAAT (involved in BA conjugation), ABCB11/BSEP (involved in bile salt export) by directly recruiting histone methyltransferase CARM1, and ABCC2/MRP2 (involved in secretion of conjugated BAs) and ABCB4 (involved in secretion of phosphatidylcholine in the small intestine). Activates transcription of SLC27A5/BACS and BAAT (involved in BA conjugation), ABCB11/BSEP (involved in bile salt export) by directly recruiting histone methyltransferase CARM1, and ABCC2/MRP2 (involved in secretion of conjugated BAs) and ABCB4 (involved in secretion of phosphatidylcholine in the small intestine). In the intestine activates FGF19 expression and secretion leading to hepatic CYP7A1 repression. The function also involves the coordinated induction of hepatic KLB/beta-klotho expression. Regulates transcription of liver UGT2B4 and SULT2A1 involved in BA detoxification; binding to the UGT2B4 promoter seems to imply a monomeric transactivation independent of RXRA. Modulates lipid homeostasis by activating liver NR0B2/SHP-mediated repression of SREBF1 (involved in de novo lipogenesis), expression of PLTP (involved in HDL formation), SCARB1 (involved in HDL hepatic uptake), APOE, APOC1, APOC4, PPARA (involved in beta-oxidation of fatty acids), VLDLR and SDC1 (involved in the hepatic uptake of LDL and IDL remnants), and inhibiting expression of MTTP (involved in VLDL assembly). Increases expression of APOC2 (promoting lipoprotein lipase activity implicated in triglyceride clearance). Transrepresses APOA1 involving a monomeric competition with NR2A1 for binding to a DR1 element. Also reduces triglyceride clearance by inhibiting expression of ANGPTL3 and APOC3 (both involved in inhibition of lipoprotein lipase). Involved in glucose homeostasis by modulating hepatic gluconeogenesis through activation of NR0B2/SHP-mediated repression of respective genes. Modulates glycogen synthesis (inducing phosphorylation of glycogen synthase kinase-3). Modulates glucose-stimulated insulin secretion and is involved in insulin resistance. Involved in intestinal innate immunity. Plays a role in protecting the distal small intestine against bacterial overgrowth and preservation of the epithelial barrier. Down-regulates inflammatory cytokine expression in several types of immune cells including macrophages and mononuclear cells. Mediates trans-repression of TLR4-induced cytokine expression; the function seems to require its sumoylation and prevents N-CoR nuclear receptor corepressor clearance from target genes such as IL1B and NOS2. Involved in the TLR9-mediated protective mechanism in intestinal inflammation. Plays an anti-inflammatory role in liver inflammation; proposed to inhibit pro-inflammatory (but not antiapoptotic) NF-kappa-B signaling. This Rattus norvegicus (Rat) protein is Bile acid receptor (Nr1h4).